The sequence spans 352 residues: Nicotinate-nucleotide--dimethylbenzimidazole phosphoribosyltransferase (352 aa).

Glutamate 318 functions as the Proton acceptor in the catalytic mechanism.

It belongs to the CobT family.

It carries out the reaction 5,6-dimethylbenzimidazole + nicotinate beta-D-ribonucleotide = alpha-ribazole 5'-phosphate + nicotinate + H(+). The protein operates within nucleoside biosynthesis; alpha-ribazole biosynthesis; alpha-ribazole from 5,6-dimethylbenzimidazole: step 1/2. In terms of biological role, catalyzes the synthesis of alpha-ribazole-5'-phosphate from nicotinate mononucleotide (NAMN) and 5,6-dimethylbenzimidazole (DMB). The polypeptide is Nicotinate-nucleotide--dimethylbenzimidazole phosphoribosyltransferase (Geobacter sulfurreducens (strain ATCC 51573 / DSM 12127 / PCA)).